The chain runs to 309 residues: MPKVRTKDLIEQFHLELISGEEGIHRPIDTSDLSRPGIEMAGFFTYYPADRVQLLGKTELTFFDTLTSDQKQERMKALCTEETPCIIVTRNQDVPDELLQASRESGMPLLRSSQTTTRLSSRLTNYLEGKLAPTTAVHGVLVDIYGVGVLITGQSGVGKSETALELVKRGHRLVADDSVEIRQEDEDMLVGSSPDLIEHLLEIRGLGIINVMTLFGAGAVRNYKRITLVINLEIWDQKKNYDRLGLDEEKMKIIDTELTKITLPVRPGRNLAVIIEVAAMNFRLKRMGVNAAQQFSERLMSAIELGNQE.

Residues His-138 and Lys-159 contribute to the active site. Residue 153-160 coordinates ATP; that stretch reads GQSGVGKS. Mg(2+) is bound at residue Ser-160. Asp-177 serves as the catalytic Proton acceptor; for phosphorylation activity. Proton donor; for dephosphorylation activity. The important for the catalytic mechanism of both phosphorylation and dephosphorylation stretch occupies residues 201 to 210; sequence LEIRGLGIIN. Glu-202 contacts Mg(2+). The active site involves Arg-243. The tract at residues 264–269 is important for the catalytic mechanism of dephosphorylation; it reads PVRPGR.

This sequence belongs to the HPrK/P family. In terms of assembly, homohexamer. The cofactor is Mg(2+).

The enzyme catalyses [HPr protein]-L-serine + ATP = [HPr protein]-O-phospho-L-serine + ADP + H(+). It catalyses the reaction [HPr protein]-O-phospho-L-serine + phosphate + H(+) = [HPr protein]-L-serine + diphosphate. Its function is as follows. Catalyzes the ATP- as well as the pyrophosphate-dependent phosphorylation of a specific serine residue in HPr, a phosphocarrier protein of the phosphoenolpyruvate-dependent sugar phosphotransferase system (PTS). HprK/P also catalyzes the pyrophosphate-producing, inorganic phosphate-dependent dephosphorylation (phosphorolysis) of seryl-phosphorylated HPr (P-Ser-HPr). The two antagonistic activities of HprK/P are regulated by several intracellular metabolites, which change their concentration in response to the absence or presence of rapidly metabolisable carbon sources (glucose, fructose, etc.) in the growth medium. Also phosphorylates/dephosphorylates the HPr-like catabolite repression protein crh on a specific serine residue. Therefore, by controlling the phosphorylation state of HPr and crh, HPrK/P is a sensor enzyme that plays a major role in the regulation of carbon metabolism and sugar transport: it mediates carbon catabolite repression (CCR), and regulates PTS-catalyzed carbohydrate uptake and inducer exclusion. This is HPr kinase/phosphorylase from Bacillus cereus (strain AH820).